Here is a 245-residue protein sequence, read N- to C-terminus: Carboxymethylenebutenolidase homolog (245 aa).

At alanine 2 the chain carries N-acetylalanine. Residues cysteine 132, aspartate 179, and histidine 212 contribute to the active site. The residue at position 223 (serine 223) is a Phosphoserine.

Belongs to the dienelactone hydrolase family.

The protein resides in the cytoplasm. The protein localises to the cytosol. Functionally, cysteine hydrolase. The sequence is that of Carboxymethylenebutenolidase homolog (Cmbl) from Rattus norvegicus (Rat).